The sequence spans 351 residues: Probable cobalt-factor III C(17)-methyltransferase (351 aa).

The protein belongs to the precorrin methyltransferase family.

It carries out the reaction Co(II)-factor III + S-adenosyl-L-methionine + H(+) = Co(II)-factor IV + S-adenosyl-L-homocysteine. Its pathway is cofactor biosynthesis; adenosylcobalamin biosynthesis; cob(II)yrinate a,c-diamide from sirohydrochlorin (anaerobic route): step 3/10. Its function is as follows. Methyltransferase that likely catalyzes the ring contraction and methylation of C-17 in cobalt-factor III to form cobalt-factor IV. May also convert cobalt-precorrin-3 to cobalt-precorrin-4. In Methanothermobacter thermautotrophicus (strain ATCC 29096 / DSM 1053 / JCM 10044 / NBRC 100330 / Delta H) (Methanobacterium thermoautotrophicum), this protein is Probable cobalt-factor III C(17)-methyltransferase (cbiH).